A 1024-amino-acid chain; its full sequence is MSYAELFCQSNFSFLTGASHAEELVLQAAFYRYQAIAITDECSVAGVVKAHATIEQHKLDIKQIVGSMFWLNDECQVVLLCPCRKAYAELCRIITNARRRSEKGSYQLSEWDLMSVRHCFVLWLPTHQESDHYWGRWLQQHHAHRLWVAIQRHLGGDDDAYTTHCELLANEFQLPIAACGGVLMHAVERLPLQHVLTAVKHGCSVDKLGFSRLSNAERALRPLNKLSRIYKSKWLEESTHIADLCEFKLSDLKYEYPTELIPNGYTPTSYLRMLVERGKKLRFPEGIPADIHQTIENELALIEELEYHYYFLTIHDIVMFAKQQGILYQGRGSAANSVVCYCLEITAVDPRQISVLFERFISREREEPPDIDVDFEHERREEVIQYIYKKYGRERAALAATVISYRFKSAVREVGKALGIEETQLDFFIKNVNRRDRTQGWQAQIIELGLQPESLKGQQFIQLVNEITGFPRHLSQHVGGFVISSGPLYELVPVENASMEDRTIIQWDKDDLESLKLLKVDVLALGMLNAIRKCFQLVEKHHQRSLSIAEITRLQDDPHVYRMIQKADTVGVFQIESRAQMSMLPRLKPARYYDLVVQIAIARPGPIQGDMVHPFLKRRNGEEPISYPSEEVKSVLERTMGVPIFQEQVIKLAMVAAGFSGGEADQLRRAMAAWKKNGDLAKFKPKLIDGMRERGYDLEFAERIFDQICGFGEYGFPESHSASFAVLAYCSAWLKFYYPAEFYTALLNSQPMGFYSPSQLIQDARRHGVEVLPVCINHSSYQHHLVQRPNGRLGVQLGFRLVKGFNQESASRLVERRPSTGYRAIQEVKQILRNRRDIELLASADAFQILSGNRYNARWAAMDSLSDLPLFNHIEEPMANYQAQPSEYENLIEDYASTGLSLSRHPITLLEEAGKLPRFTRMKQLVEKEHNSLVTVIGVVTGRQSPGTAAGVTFFTLEDDTGNINVVVWRATARAQKQAYLTSKVLMVKGILEREGEVTHVIAGKLIDCTHNLAELKSKSRDFH.

This sequence belongs to the DNA polymerase type-C family. DnaE2 subfamily.

Its subcellular location is the cytoplasm. The enzyme catalyses DNA(n) + a 2'-deoxyribonucleoside 5'-triphosphate = DNA(n+1) + diphosphate. DNA polymerase involved in damage-induced mutagenesis and translesion synthesis (TLS). It is not the major replicative DNA polymerase. The chain is Error-prone DNA polymerase from Vibrio campbellii (strain ATCC BAA-1116).